We begin with the raw amino-acid sequence, 481 residues long: Aspartyl/glutamyl-tRNA(Asn/Gln) amidotransferase subunit B (481 aa).

Belongs to the GatB/GatE family. GatB subfamily. As to quaternary structure, heterotrimer of A, B and C subunits.

The enzyme catalyses L-glutamyl-tRNA(Gln) + L-glutamine + ATP + H2O = L-glutaminyl-tRNA(Gln) + L-glutamate + ADP + phosphate + H(+). It carries out the reaction L-aspartyl-tRNA(Asn) + L-glutamine + ATP + H2O = L-asparaginyl-tRNA(Asn) + L-glutamate + ADP + phosphate + 2 H(+). Its function is as follows. Allows the formation of correctly charged Asn-tRNA(Asn) or Gln-tRNA(Gln) through the transamidation of misacylated Asp-tRNA(Asn) or Glu-tRNA(Gln) in organisms which lack either or both of asparaginyl-tRNA or glutaminyl-tRNA synthetases. The reaction takes place in the presence of glutamine and ATP through an activated phospho-Asp-tRNA(Asn) or phospho-Glu-tRNA(Gln). The protein is Aspartyl/glutamyl-tRNA(Asn/Gln) amidotransferase subunit B of Pseudomonas entomophila (strain L48).